The chain runs to 35 residues: Conotoxin M11.2 (35 aa).

Intrachain disulfides connect cysteine 2-cysteine 16, cysteine 9-cysteine 21, cysteine 15-cysteine 26, and cysteine 20-cysteine 33.

It belongs to the conotoxin I1 superfamily. Expressed by the venom duct.

It localises to the secreted. In Conus magus (Magical cone), this protein is Conotoxin M11.2.